Reading from the N-terminus, the 469-residue chain is 3-isopropylmalate dehydratase large subunit (469 aa).

[4Fe-4S] cluster contacts are provided by Cys349, Cys410, and Cys413.

This sequence belongs to the aconitase/IPM isomerase family. LeuC type 1 subfamily. In terms of assembly, heterodimer of LeuC and LeuD. [4Fe-4S] cluster is required as a cofactor.

It carries out the reaction (2R,3S)-3-isopropylmalate = (2S)-2-isopropylmalate. It participates in amino-acid biosynthesis; L-leucine biosynthesis; L-leucine from 3-methyl-2-oxobutanoate: step 2/4. Catalyzes the isomerization between 2-isopropylmalate and 3-isopropylmalate, via the formation of 2-isopropylmaleate. The protein is 3-isopropylmalate dehydratase large subunit of Neisseria meningitidis serogroup C (strain 053442).